Here is an 85-residue protein sequence, read N- to C-terminus: Putative membrane protein insertion efficiency factor (85 aa).

Belongs to the UPF0161 family.

Its subcellular location is the cell inner membrane. Could be involved in insertion of integral membrane proteins into the membrane. In Escherichia fergusonii (strain ATCC 35469 / DSM 13698 / CCUG 18766 / IAM 14443 / JCM 21226 / LMG 7866 / NBRC 102419 / NCTC 12128 / CDC 0568-73), this protein is Putative membrane protein insertion efficiency factor.